Here is a 141-residue protein sequence, read N- to C-terminus: Large ribosomal subunit protein uL22 (141 aa).

This sequence belongs to the universal ribosomal protein uL22 family. Part of the 50S ribosomal subunit.

In terms of biological role, this protein binds specifically to 23S rRNA; its binding is stimulated by other ribosomal proteins, e.g. L4, L17, and L20. It is important during the early stages of 50S assembly. It makes multiple contacts with different domains of the 23S rRNA in the assembled 50S subunit and ribosome. The globular domain of the protein is located near the polypeptide exit tunnel on the outside of the subunit, while an extended beta-hairpin is found that lines the wall of the exit tunnel in the center of the 70S ribosome. The polypeptide is Large ribosomal subunit protein uL22 (Frankia alni (strain DSM 45986 / CECT 9034 / ACN14a)).